Consider the following 471-residue polypeptide: Alpha-galactosidase (471 aa).

Positions 1-18 (MSYIYLFITAAAVTGALG) are cleaved as a signal peptide. Cysteines 42 and 74 form a disulfide. Substrate is bound by residues D72 and D73. N-linked (GlcNAc...) asparagine glycosylation is present at N82. An intrachain disulfide couples C121 to C151. Residue K147 coordinates substrate. D149 functions as the Nucleophile in the catalytic mechanism. N175 is a glycosylation site (N-linked (GlcNAc...) asparagine). R205 provides a ligand contact to substrate. D209 acts as the Proton donor in catalysis. Intrachain disulfides connect C221-C237 and C223-C230. A substrate-binding site is contributed by Q251. 7 N-linked (GlcNAc...) asparagine glycosylation sites follow: N270, N361, N370, N417, N422, N435, and N454.

The protein belongs to the glycosyl hydrolase 27 family. In terms of assembly, homotetramer.

It is found in the secreted. It carries out the reaction Hydrolysis of terminal, non-reducing alpha-D-galactose residues in alpha-D-galactosides, including galactose oligosaccharides, galactomannans and galactolipids.. The polypeptide is Alpha-galactosidase (MEL) (Saccharomyces mikatae (Yeast)).